The chain runs to 214 residues: Adenylate kinase (214 aa).

10 to 15 (GAGKGT) serves as a coordination point for ATP. Residues 30-59 (STGDMLRAAVKSGSELGKQAKDIMDAGKLV) form an NMP region. Residues Thr-31, Arg-36, 57 to 59 (KLV), 85 to 88 (GFPR), and Gln-92 contribute to the AMP site. The LID stretch occupies residues 122-159 (GRRVHAPSGRVYHVKFNPPKVEGKDDVTGEELTTRKDD). Residues Arg-123 and 132-133 (VY) contribute to the ATP site. Arg-156 and Arg-167 together coordinate AMP. Lys-192 is subject to N6-acetyllysine. Residue Lys-200 coordinates ATP.

This sequence belongs to the adenylate kinase family. Monomer.

It is found in the cytoplasm. It catalyses the reaction AMP + ATP = 2 ADP. It participates in purine metabolism; AMP biosynthesis via salvage pathway; AMP from ADP: step 1/1. Functionally, catalyzes the reversible transfer of the terminal phosphate group between ATP and AMP. Plays an important role in cellular energy homeostasis and in adenine nucleotide metabolism. This chain is Adenylate kinase, found in Escherichia coli O45:K1 (strain S88 / ExPEC).